The chain runs to 245 residues: Putative transport permease YvfS (245 aa).

Transmembrane regions (helical) follow at residues 20–40 (YFVL…TNVV), 53–73 (HYLM…TLGI), 103–123 (IGQS…GAII), 137–157 (GLWI…IGLM), 164–184 (AGIS…WMPF), and 214–234 (GSPT…FMLL). The ABC transmembrane type-2 domain occupies 20 to 242 (YFVLWSLIMP…LLSKYIRRKQ (223 aa)).

The protein belongs to the ABC-2 integral membrane protein family.

The protein localises to the cell membrane. This is Putative transport permease YvfS (yvfS) from Bacillus subtilis (strain 168).